We begin with the raw amino-acid sequence, 422 residues long: Glucose-1-phosphate adenylyltransferase (422 aa).

Residues Y109, G175, 190–191 (EK), and S208 contribute to the alpha-D-glucose 1-phosphate site.

The protein belongs to the bacterial/plant glucose-1-phosphate adenylyltransferase family. As to quaternary structure, homotetramer.

The catalysed reaction is alpha-D-glucose 1-phosphate + ATP + H(+) = ADP-alpha-D-glucose + diphosphate. Its pathway is glycan biosynthesis; glycogen biosynthesis. Functionally, involved in the biosynthesis of ADP-glucose, a building block required for the elongation reactions to produce glycogen. Catalyzes the reaction between ATP and alpha-D-glucose 1-phosphate (G1P) to produce pyrophosphate and ADP-Glc. The chain is Glucose-1-phosphate adenylyltransferase from Shewanella amazonensis (strain ATCC BAA-1098 / SB2B).